The primary structure comprises 319 residues: Malate dehydrogenase (319 aa).

Residues 7 to 13 (GAAGGIG) and Asp-34 each bind NAD(+). Positions 81 and 87 each coordinate substrate. Residues Asn-94 and 117–119 (ITN) each bind NAD(+). 2 residues coordinate substrate: Asn-119 and Arg-153. His-177 (proton acceptor) is an active-site residue. Met-227 provides a ligand contact to NAD(+).

It belongs to the LDH/MDH superfamily. MDH type 1 family. Homodimer.

The enzyme catalyses (S)-malate + NAD(+) = oxaloacetate + NADH + H(+). Functionally, catalyzes the reversible oxidation of malate to oxaloacetate. This Psychromonas ingrahamii (strain DSM 17664 / CCUG 51855 / 37) protein is Malate dehydrogenase.